The primary structure comprises 156 residues: Ribosome maturation factor RimP (156 aa).

The protein belongs to the RimP family.

Its subcellular location is the cytoplasm. Functionally, required for maturation of 30S ribosomal subunits. This Bacillus cytotoxicus (strain DSM 22905 / CIP 110041 / 391-98 / NVH 391-98) protein is Ribosome maturation factor RimP.